The following is a 451-amino-acid chain: UDP-N-acetylmuramate--L-alanine ligase (451 aa).

Residue 110-116 coordinates ATP; the sequence is GTHGKTT.

This sequence belongs to the MurCDEF family.

It is found in the cytoplasm. The enzyme catalyses UDP-N-acetyl-alpha-D-muramate + L-alanine + ATP = UDP-N-acetyl-alpha-D-muramoyl-L-alanine + ADP + phosphate + H(+). It functions in the pathway cell wall biogenesis; peptidoglycan biosynthesis. Cell wall formation. This chain is UDP-N-acetylmuramate--L-alanine ligase, found in Francisella tularensis subsp. holarctica (strain FTNF002-00 / FTA).